Reading from the N-terminus, the 561-residue chain is Tectonic-like complex member MKS1 (561 aa).

The C2 B9-type domain occupies 314-442; that stretch reads LRLFVNGEVV…TVSTWRPMEL (129 aa).

Part of the tectonic-like complex (also named B9 complex). Interacts with TMEM107. Interacts with TCTN3, AHI1, TCTN1, TCTN2, CC2D2A. Interacts with FLNA. Interacts with TMEM67. Interacts with B9D1 and B9D2. In terms of tissue distribution, widely expressed in embryo at 15.5 dpc, with a relatively strong expression in brain, liver, kidney and digits of the upper limbs. Highly expressed in bronchiolar epithelium.

It localises to the cytoplasm. It is found in the cytoskeleton. The protein resides in the cilium basal body. Its subcellular location is the microtubule organizing center. The protein localises to the centrosome. Component of the tectonic-like complex, a complex localized at the transition zone of primary cilia and acting as a barrier that prevents diffusion of transmembrane proteins between the cilia and plasma membranes. Involved in centrosome migration to the apical cell surface during early ciliogenesis. Required for ciliary structure and function, including a role in regulating length and appropriate number through modulating centrosome duplication. Required for cell branching morphology. The protein is Tectonic-like complex member MKS1 (Mks1) of Mus musculus (Mouse).